The primary structure comprises 203 residues: Holliday junction branch migration complex subunit RuvA (203 aa).

Positions 1–63 are domain I; that stretch reads MIDYLRGTLT…EDVIRLYGFR (63 aa). Residues 64 to 142 form a domain II region; the sequence is TKEKRSLFEK…ELHPGLFSQK (79 aa). The flexible linker stretch occupies residues 143–152; the sequence is EEQPKPHEKN. The segment at 153-203 is domain III; that stretch reads DGNQALDEAMEALKALGYVEKELKKVKPKLEQETLTTDAYIKKALQLMLNR.

The protein belongs to the RuvA family. As to quaternary structure, homotetramer. Forms an RuvA(8)-RuvB(12)-Holliday junction (HJ) complex. HJ DNA is sandwiched between 2 RuvA tetramers; dsDNA enters through RuvA and exits via RuvB. An RuvB hexamer assembles on each DNA strand where it exits the tetramer. Each RuvB hexamer is contacted by two RuvA subunits (via domain III) on 2 adjacent RuvB subunits; this complex drives branch migration. In the full resolvosome a probable DNA-RuvA(4)-RuvB(12)-RuvC(2) complex forms which resolves the HJ.

Its subcellular location is the cytoplasm. In terms of biological role, the RuvA-RuvB-RuvC complex processes Holliday junction (HJ) DNA during genetic recombination and DNA repair, while the RuvA-RuvB complex plays an important role in the rescue of blocked DNA replication forks via replication fork reversal (RFR). RuvA specifically binds to HJ cruciform DNA, conferring on it an open structure. The RuvB hexamer acts as an ATP-dependent pump, pulling dsDNA into and through the RuvAB complex. HJ branch migration allows RuvC to scan DNA until it finds its consensus sequence, where it cleaves and resolves the cruciform DNA. The sequence is that of Holliday junction branch migration complex subunit RuvA from Halalkalibacterium halodurans (strain ATCC BAA-125 / DSM 18197 / FERM 7344 / JCM 9153 / C-125) (Bacillus halodurans).